We begin with the raw amino-acid sequence, 97 residues long: MKRICSIYKSPRKNEMYLYVLKADGLERVPEGLLPFFGTPVHAFDLVLTPERKLAREDITKVLENLESQGYHLQMPPLEDEYIEHLPEELLRRNDPV.

Residues 3–87 (RICSIYKSPR…LEDEYIEHLP (85 aa)) enclose the YcgL domain.

The sequence is that of YcgL domain-containing protein PP_4590 from Pseudomonas putida (strain ATCC 47054 / DSM 6125 / CFBP 8728 / NCIMB 11950 / KT2440).